The chain runs to 401 residues: uncharacterized protein (401 aa).

Residues cysteine 7, cysteine 13, cysteine 16, and cysteine 94 each coordinate [4Fe-4S] cluster. Glutamine 230, tyrosine 259, glutamate 280, and aspartate 328 together coordinate S-adenosyl-L-methionine. Cysteine 355 functions as the Nucleophile in the catalytic mechanism.

The protein belongs to the class I-like SAM-binding methyltransferase superfamily. RNA M5U methyltransferase family.

This is an uncharacterized protein from Chlamydia pneumoniae (Chlamydophila pneumoniae).